We begin with the raw amino-acid sequence, 137 residues long: Protein apnoia (137 aa).

The next 3 membrane-spanning stretches (helical) occupy residues 7–27, 55–75, and 76–96; these read IVFALVCLFLACDLVLGQQQA, LVPGAFVVGVITTLLAALTVV, and SIKGLGVGVILLVLAIGQMLS.

As to quaternary structure, interacts with crb.

The protein resides in the apical cell membrane. Functionally, transmembrane protein that plays a key role in trachea development by regulating crb localization and maintenance at the apical cell membrane. Required for anisotropic apical surface expansion important for tracheal tube elongation and lumen stability at larval stages. The protein is Protein apnoia of Drosophila melanogaster (Fruit fly).